Reading from the N-terminus, the 370-residue chain is MVNVRQPRDVAQILLSVLFLAIMIVACLWIVQPFILGFAWAGTVVIATWPVLLRLQKIMFGRRSLAVLVMTLLLVMVFIIPIALLVNSIVDGSGPLIKAISSGDMTLPDLAWLNTIPVIGAKLYAGWHNLLDMGGTAIMAKVRPYIGTTTTWFVGQAAHIGRFMVHCALMLLFSALLYWRGEQVAQGIRHFATRLAGVRGDAAVLLAAQAIRAVALGVVVTALVQAVLGGIGLAVSGVPYATLLTVLMILSCLVQLGPLPVLIPAIIWLYWTGDTTWGTVLLVWSGVVGTLDNVIRPMLIRMGADLPLILILSGVIGGLIAFGMIGLFIGPVLLAVSWRLFAAWVEEVPPPTDQPEEILEELGEIEKPNK.

Over 1-17 the chain is Periplasmic; the sequence is MVNVRQPRDVAQILLSV. A helical transmembrane segment spans residues 18–38; the sequence is LFLAIMIVACLWIVQPFILGF. A topological domain (cytoplasmic) is located at residue Ala-39. Residues 40-60 form a helical membrane-spanning segment; that stretch reads WAGTVVIATWPVLLRLQKIMF. Over 61–65 the chain is Periplasmic; it reads GRRSL. Residues 66–86 traverse the membrane as a helical segment; sequence AVLVMTLLLVMVFIIPIALLV. Topologically, residues 87-106 are cytoplasmic; the sequence is NSIVDGSGPLIKAISSGDMT. Residues 107–127 form a helical membrane-spanning segment; it reads LPDLAWLNTIPVIGAKLYAGW. The Periplasmic portion of the chain corresponds to 128–156; the sequence is HNLLDMGGTAIMAKVRPYIGTTTTWFVGQ. Residues 157–177 traverse the membrane as a helical segment; the sequence is AAHIGRFMVHCALMLLFSALL. The Cytoplasmic portion of the chain corresponds to 178 to 213; sequence YWRGEQVAQGIRHFATRLAGVRGDAAVLLAAQAIRA. Residues 214–234 traverse the membrane as a helical segment; it reads VALGVVVTALVQAVLGGIGLA. Residues 235–248 are Periplasmic-facing; that stretch reads VSGVPYATLLTVLM. A helical transmembrane segment spans residues 249–269; that stretch reads ILSCLVQLGPLPVLIPAIIWL. Topologically, residues 270-274 are cytoplasmic; it reads YWTGD. A helical transmembrane segment spans residues 275–295; it reads TTWGTVLLVWSGVVGTLDNVI. The Periplasmic segment spans residues 296 to 308; that stretch reads RPMLIRMGADLPL. A helical transmembrane segment spans residues 309–329; it reads ILILSGVIGGLIAFGMIGLFI. The Cytoplasmic segment spans residues 330–370; the sequence is GPVLLAVSWRLFAAWVEEVPPPTDQPEEILEELGEIEKPNK.

This sequence belongs to the autoinducer-2 exporter (AI-2E) (TC 2.A.86) family.

It localises to the cell inner membrane. In Escherichia coli (strain K12), this protein is Putative transport protein YdiK (ydiK).